The primary structure comprises 122 residues: Small ribosomal subunit protein uS13 (122 aa).

The tract at residues 95–122 is disordered; the sequence is GLPVRGQRTHTNARTRKGPAKSIAGKKK.

The protein belongs to the universal ribosomal protein uS13 family. In terms of assembly, part of the 30S ribosomal subunit. Forms a loose heterodimer with protein S19. Forms two bridges to the 50S subunit in the 70S ribosome.

Its function is as follows. Located at the top of the head of the 30S subunit, it contacts several helices of the 16S rRNA. In the 70S ribosome it contacts the 23S rRNA (bridge B1a) and protein L5 of the 50S subunit (bridge B1b), connecting the 2 subunits; these bridges are implicated in subunit movement. Contacts the tRNAs in the A and P-sites. This Rhodopseudomonas palustris (strain BisB18) protein is Small ribosomal subunit protein uS13.